The chain runs to 371 residues: Macronuclear solute carrier homolog CR-MSC (371 aa).

Solcar repeat units follow at residues 16–111 (RMNY…FYDK), 120–208 (ARPD…CKEN), and 215–304 (PHWI…LSQF). A run of 6 helical transmembrane segments spans residues 22–42 (FAAA…LDMV), 89–109 (TFFF…GYFY), 126–146 (VAAG…IDIV), 184–204 (AGAN…IYDW), 221–241 (LWGT…FDMI), and 281–301 (FGSF…ICYL).

Belongs to the mitochondrial carrier (TC 2.A.29) family.

Its subcellular location is the membrane. The protein is Macronuclear solute carrier homolog CR-MSC of Oxytricha fallax.